The following is a 336-amino-acid chain: Phosphonate dehydrogenase (336 aa).

NAD(+) contacts are provided by residues alanine 155–isoleucine 156, glutamate 175, proline 235–arginine 237, and aspartate 261. Residue arginine 237 is part of the active site. Glutamate 266 is an active-site residue. Histidine 292 serves as the catalytic Proton donor. Histidine 292–serine 295 serves as a coordination point for NAD(+).

In terms of assembly, homodimer.

It catalyses the reaction phosphonate + NAD(+) + H2O = phosphate + NADH + H(+). Inhibited by NaCl, NADH and sulfite. Catalyzes phosphite (phosphonate) oxidation. This chain is Phosphonate dehydrogenase (ptxD), found in Stutzerimonas stutzeri (Pseudomonas stutzeri).